Consider the following 482-residue polypeptide: ADP-ribosylation factor GTPase-activating protein effector protein 1 (482 aa).

The disordered stretch occupies residues 116–156; that stretch reads QHKSTHSHHINHQTHPIHSSSSNSNSNNRIPTKTDSSKQHT. A compositionally biased stretch (basic residues) spans 118 to 127; that stretch reads KSTHSHHINH. Low complexity predominate over residues 134-143; that stretch reads SSSSNSNSNN. Positions 170–297 constitute an Arf-GAP domain; it reads DELLSIVRKI…FVIDSNQGRE (128 aa). The C4-type zinc finger occupies 186-210; it reads CCDCGSTATVEWVSINLLCILCIKC.

The protein resides in the cytoplasm. In terms of biological role, GTPase-activating protein (GAP) for the ADP ribosylation factors ARF1 and ARF2. May be involved in the endocytic pathway. The sequence is that of ADP-ribosylation factor GTPase-activating protein effector protein 1 (AGE1) from Saccharomyces cerevisiae (strain ATCC 204508 / S288c) (Baker's yeast).